Here is a 429-residue protein sequence, read N- to C-terminus: Ribosomal RNA small subunit methyltransferase B (429 aa).

Residues 254–260 (CAAPGGK), Asp-277, Asp-303, and Asp-322 contribute to the S-adenosyl-L-methionine site. The active-site Nucleophile is the Cys-375.

It belongs to the class I-like SAM-binding methyltransferase superfamily. RsmB/NOP family.

Its subcellular location is the cytoplasm. The catalysed reaction is cytidine(967) in 16S rRNA + S-adenosyl-L-methionine = 5-methylcytidine(967) in 16S rRNA + S-adenosyl-L-homocysteine + H(+). Specifically methylates the cytosine at position 967 (m5C967) of 16S rRNA. The sequence is that of Ribosomal RNA small subunit methyltransferase B from Serratia proteamaculans (strain 568).